The following is a 336-amino-acid chain: 3-isopropylmalate dehydrogenase (336 aa).

The substrate site is built by arginine 87, arginine 97, arginine 121, and aspartate 211. The Mg(2+) site is built by aspartate 211, aspartate 235, and aspartate 239. 271–283 (GSAPDIAGQGIAD) lines the NAD(+) pocket.

Belongs to the isocitrate and isopropylmalate dehydrogenases family. LeuB type 2 subfamily. As to quaternary structure, homodimer. Requires Mg(2+) as cofactor. Mn(2+) is required as a cofactor.

It localises to the cytoplasm. The catalysed reaction is (2R,3S)-3-isopropylmalate + NAD(+) = 4-methyl-2-oxopentanoate + CO2 + NADH. It functions in the pathway amino-acid biosynthesis; L-leucine biosynthesis; L-leucine from 3-methyl-2-oxobutanoate: step 3/4. Catalyzes the oxidation of 3-carboxy-2-hydroxy-4-methylpentanoate (3-isopropylmalate) to 3-carboxy-4-methyl-2-oxopentanoate. The product decarboxylates to 4-methyl-2 oxopentanoate. This is 3-isopropylmalate dehydrogenase from Mycolicibacterium paratuberculosis (strain ATCC BAA-968 / K-10) (Mycobacterium paratuberculosis).